The sequence spans 278 residues: Bifunctional protein FolD (278 aa).

NADP(+)-binding positions include G163–S165, S188, and V229.

The protein belongs to the tetrahydrofolate dehydrogenase/cyclohydrolase family. Homodimer.

It carries out the reaction (6R)-5,10-methylene-5,6,7,8-tetrahydrofolate + NADP(+) = (6R)-5,10-methenyltetrahydrofolate + NADPH. The enzyme catalyses (6R)-5,10-methenyltetrahydrofolate + H2O = (6R)-10-formyltetrahydrofolate + H(+). Its pathway is one-carbon metabolism; tetrahydrofolate interconversion. Its function is as follows. Catalyzes the oxidation of 5,10-methylenetetrahydrofolate to 5,10-methenyltetrahydrofolate and then the hydrolysis of 5,10-methenyltetrahydrofolate to 10-formyltetrahydrofolate. This chain is Bifunctional protein FolD, found in Exiguobacterium sp. (strain ATCC BAA-1283 / AT1b).